The following is a 122-amino-acid chain: UPF0102 protein R00337 (122 aa).

Belongs to the UPF0102 family.

The sequence is that of UPF0102 protein R00337 from Rhizobium meliloti (strain 1021) (Ensifer meliloti).